We begin with the raw amino-acid sequence, 255 residues long: Sugar fermentation stimulation protein homolog (255 aa).

Belongs to the SfsA family.

This is Sugar fermentation stimulation protein homolog from Synechococcus sp. (strain WH7803).